The primary structure comprises 578 residues: Pentatricopeptide repeat-containing protein At4g22760 (578 aa).

13 PPR repeats span residues 68–102 (DSFSWGCLVRFLSQHRKFKETVDVYIDMHNSGIPP), 103–137 (SSHAVTSVLRACGKMENMVDGKPIHAQALKNGLCG), 138–168 (CVYVQTGLVGLYSRLGYIELAKKAFDDIAEK), 169–203 (NTVSWNSLLHGYLESGELDEARRVFDKIPEKDAVS), 204–230 (WNLIISSYAKKGDMGNACSLFSAMPLK), 231–261 (SPASWNILIGGYVNCREMKLARTYFDAMPQK), 262–292 (NGVSWITMISGYTKLGDVQSAEELFRLMSKK), 293–327 (DKLVYDAMIACYTQNGKPKDALKLFAQMLERNSYI), 330–364 (DEITLSSVVSANSQLGNTSFGTWVESYITEHGIKI), 365–395 (DDLLSTSLIDLYMKGGDFAKAFKMFSNLNKK), 396–430 (DTVSYSAMIMGCGINGMATEANSLFTAMIEKKIPP), 431–465 (NVVTFTGLLSAYSHSGLVQEGYKCFNSMKDHNLEP), and 466–496 (SADHYGIMVDMLGRAGRLEEAYELIKSMPMQ). Residues 501–576 (VWGALLLASG…TLGCSWVEGS (76 aa)) are type E motif.

The protein belongs to the PPR family. PCMP-E subfamily.

The protein is Pentatricopeptide repeat-containing protein At4g22760 (PCMP-E6) of Arabidopsis thaliana (Mouse-ear cress).